Here is a 456-residue protein sequence, read N- to C-terminus: Bifunctional protein GlmU (456 aa).

A pyrophosphorylase region spans residues Met1–Arg229. Residues Leu11–Gly14, Lys25, Gln76, Gly81–Thr82, Tyr103–Asp105, Gly140, Glu154, Asn169, and Asn227 each bind UDP-N-acetyl-alpha-D-glucosamine. Mg(2+) is bound at residue Asp105. Asn227 provides a ligand contact to Mg(2+). A linker region spans residues Leu230–Ala250. The tract at residues Gly251–Lys456 is N-acetyltransferase. 2 residues coordinate UDP-N-acetyl-alpha-D-glucosamine: Arg333 and Lys351. The Proton acceptor role is filled by His363. Residues Tyr366 and Asn377 each contribute to the UDP-N-acetyl-alpha-D-glucosamine site. Acetyl-CoA is bound by residues Ala380, Asn386–Tyr387, Ser405, Ala423, and Arg440.

The protein in the N-terminal section; belongs to the N-acetylglucosamine-1-phosphate uridyltransferase family. This sequence in the C-terminal section; belongs to the transferase hexapeptide repeat family. Homotrimer. It depends on Mg(2+) as a cofactor.

The protein resides in the cytoplasm. It carries out the reaction alpha-D-glucosamine 1-phosphate + acetyl-CoA = N-acetyl-alpha-D-glucosamine 1-phosphate + CoA + H(+). The enzyme catalyses N-acetyl-alpha-D-glucosamine 1-phosphate + UTP + H(+) = UDP-N-acetyl-alpha-D-glucosamine + diphosphate. It functions in the pathway nucleotide-sugar biosynthesis; UDP-N-acetyl-alpha-D-glucosamine biosynthesis; N-acetyl-alpha-D-glucosamine 1-phosphate from alpha-D-glucosamine 6-phosphate (route II): step 2/2. It participates in nucleotide-sugar biosynthesis; UDP-N-acetyl-alpha-D-glucosamine biosynthesis; UDP-N-acetyl-alpha-D-glucosamine from N-acetyl-alpha-D-glucosamine 1-phosphate: step 1/1. The protein operates within bacterial outer membrane biogenesis; LPS lipid A biosynthesis. Catalyzes the last two sequential reactions in the de novo biosynthetic pathway for UDP-N-acetylglucosamine (UDP-GlcNAc). The C-terminal domain catalyzes the transfer of acetyl group from acetyl coenzyme A to glucosamine-1-phosphate (GlcN-1-P) to produce N-acetylglucosamine-1-phosphate (GlcNAc-1-P), which is converted into UDP-GlcNAc by the transfer of uridine 5-monophosphate (from uridine 5-triphosphate), a reaction catalyzed by the N-terminal domain. The sequence is that of Bifunctional protein GlmU from Escherichia coli O81 (strain ED1a).